Consider the following 20-residue polypeptide: T cell receptor alpha joining 3 (20 aa).

Alpha-beta TR is a heterodimer composed of an alpha and beta chain; disulfide-linked. The alpha-beta TR is associated with the transmembrane signaling CD3 coreceptor proteins to form the TR-CD3 (TcR or TCR). The assembly of alpha-beta TR heterodimers with CD3 occurs in the endoplasmic reticulum where a single alpha-beta TR heterodimer associates with one CD3D-CD3E heterodimer, one CD3G-CD3E heterodimer and one CD247 homodimer forming a stable octameric structure. CD3D-CD3E and CD3G-CD3E heterodimers preferentially associate with TR alpha and TR beta chains, respectively. The association of the CD247 homodimer is the last step of TcR assembly in the endoplasmic reticulum and is required for transport to the cell surface.

It localises to the cell membrane. In terms of biological role, j region of the variable domain of T cell receptor (TR) alpha chain that participates in the antigen recognition. Alpha-beta T cell receptors are antigen specific receptors which are essential to the immune response and are present on the cell surface of T lymphocytes. Recognize peptide-major histocompatibility (MH) (pMH) complexes that are displayed by antigen presenting cells (APC), a prerequisite for efficient T cell adaptive immunity against pathogens. Binding of alpha-beta TR to pMH complex initiates TR-CD3 clustering on the cell surface and intracellular activation of LCK that phosphorylates the ITAM motifs of CD3G, CD3D, CD3E and CD247 enabling the recruitment of ZAP70. In turn ZAP70 phosphorylates LAT, which recruits numerous signaling molecules to form the LAT signalosome. The LAT signalosome propagates signal branching to three major signaling pathways, the calcium, the mitogen-activated protein kinase (MAPK) kinase and the nuclear factor NF-kappa-B (NF-kB) pathways, leading to the mobilization of transcription factors that are critical for gene expression and essential for T cell growth and differentiation. The T cell repertoire is generated in the thymus, by V-(D)-J rearrangement. This repertoire is then shaped by intrathymic selection events to generate a peripheral T cell pool of self-MH restricted, non-autoaggressive T cells. Post-thymic interaction of alpha-beta TR with the pMH complexes shapes TR structural and functional avidity. The sequence is that of T cell receptor alpha joining 3 from Homo sapiens (Human).